The following is a 224-amino-acid chain: Ribonuclease 3 (224 aa).

Residues 4-126 (LDRLQRQISY…IIGAISLDSS (123 aa)) form the RNase III domain. A Mg(2+)-binding site is contributed by glutamate 39. Residue aspartate 43 is part of the active site. Aspartate 112 and glutamate 115 together coordinate Mg(2+). The active site involves glutamate 115. In terms of domain architecture, DRBM spans 153-223 (DPKTRLQEYL…AEQILTALEI (71 aa)).

Belongs to the ribonuclease III family. As to quaternary structure, homodimer. Mg(2+) serves as cofactor.

It localises to the cytoplasm. The catalysed reaction is Endonucleolytic cleavage to 5'-phosphomonoester.. Functionally, digests double-stranded RNA. Involved in the processing of primary rRNA transcript to yield the immediate precursors to the large and small rRNAs (23S and 16S). Processes some mRNAs, and tRNAs when they are encoded in the rRNA operon. Processes pre-crRNA and tracrRNA of type II CRISPR loci if present in the organism. The sequence is that of Ribonuclease 3 from Mannheimia succiniciproducens (strain KCTC 0769BP / MBEL55E).